A 114-amino-acid chain; its full sequence is uncharacterized protein (114 aa).

2 helical membrane-spanning segments follow: residues 9-29 (LAIFLFFVAVGFIIFIGSFWL) and 75-95 (LVHFFIPVGFGLLFGIAVAII).

Its subcellular location is the cell membrane. This is an uncharacterized protein from Mycoplasma pneumoniae (strain ATCC 29342 / M129 / Subtype 1) (Mycoplasmoides pneumoniae).